Consider the following 122-residue polypeptide: Immunoglobulin lambda variable 8-61 (122 aa).

The first 24 residues, 1-24 (MSVPTMAWMMLLLGLLAYGSGVDS), serve as a signal peptide directing secretion. A framework-1 region spans residues 25 to 49 (QTVVTQEPSFSVSPGGTVTLTCGLS). Positions 25–122 (QTVVTQEPSF…YCVLYMGSGI (98 aa)) constitute an Ig-like domain. Cysteines 46 and 114 form a disulfide. The interval 50-58 (SGSVSTSYY) is complementarity-determining-1. The framework-2 stretch occupies residues 59–75 (PSWYQQTPGQAPRTLIY). Residues 76 to 78 (STN) are complementarity-determining-2. The framework-3 stretch occupies residues 79 to 114 (TRSSGVPDRFSGSILGNKAALTITGAQADDESDYYC). Residues 115–122 (VLYMGSGI) are complementarity-determining-3.

Immunoglobulins are composed of two identical heavy chains and two identical light chains; disulfide-linked.

It is found in the secreted. The protein resides in the cell membrane. Functionally, v region of the variable domain of immunoglobulin light chains that participates in the antigen recognition. Immunoglobulins, also known as antibodies, are membrane-bound or secreted glycoproteins produced by B lymphocytes. In the recognition phase of humoral immunity, the membrane-bound immunoglobulins serve as receptors which, upon binding of a specific antigen, trigger the clonal expansion and differentiation of B lymphocytes into immunoglobulins-secreting plasma cells. Secreted immunoglobulins mediate the effector phase of humoral immunity, which results in the elimination of bound antigens. The antigen binding site is formed by the variable domain of one heavy chain, together with that of its associated light chain. Thus, each immunoglobulin has two antigen binding sites with remarkable affinity for a particular antigen. The variable domains are assembled by a process called V-(D)-J rearrangement and can then be subjected to somatic hypermutations which, after exposure to antigen and selection, allow affinity maturation for a particular antigen. This chain is Immunoglobulin lambda variable 8-61, found in Homo sapiens (Human).